The sequence spans 217 residues: Probable transaldolase (217 aa).

Residue Lys-83 is the Schiff-base intermediate with substrate of the active site.

The protein belongs to the transaldolase family. Type 3B subfamily.

The protein localises to the cytoplasm. The catalysed reaction is D-sedoheptulose 7-phosphate + D-glyceraldehyde 3-phosphate = D-erythrose 4-phosphate + beta-D-fructose 6-phosphate. It participates in carbohydrate degradation; pentose phosphate pathway; D-glyceraldehyde 3-phosphate and beta-D-fructose 6-phosphate from D-ribose 5-phosphate and D-xylulose 5-phosphate (non-oxidative stage): step 2/3. Transaldolase is important for the balance of metabolites in the pentose-phosphate pathway. This chain is Probable transaldolase, found in Phenylobacterium zucineum (strain HLK1).